The sequence spans 92 residues: MPKLEMMLLVLLILPLSSFSAAGEQVVQGDQRSDGLARYLQRGGRDVQECQVVTPGSKWGRCCLNRVCGPMCCPASHCYCIYHRGRGHGCSC.

The N-terminal stretch at 1 to 24 (MPKLEMMLLVLLILPLSSFSAAGE) is a signal peptide. Positions 25 to 45 (QVVQGDQRSDGLARYLQRGGR) are excised as a propeptide. A 4-carboxyglutamate modification is found at Glu-49. A 4-hydroxyproline modification is found at Pro-55. Disulfide bonds link Cys-63–Cys-72, Cys-68–Cys-80, Cys-73–Cys-90, and Cys-78–Cys-92.

It belongs to the conotoxin D superfamily. In terms of assembly, hetero-, homo- or pseudo-homodimer (identical sequence, different post-translational modifications). As to expression, expressed by the venom duct.

The protein localises to the secreted. In terms of biological role, alpha-conotoxins act on postsynaptic membranes, they bind to the nicotinic acetylcholine receptors (nAChR) and thus inhibit them. Through its two C-terminal domains, this homodimeric protein would bind to two nAChR allosteric sites, located outside the nAChR C-loop of the principal binding face and at the adjacent binding interface in a clockwise direction. This toxin specifically blocks mammalian neuronal nAChR of the alpha-7/CHRNA7, alpha-3-beta-2/CHRNA3-CHRNB2 and alpha-4-beta-2/CHRNA4-CHRNB2 subtypes. This chain is Alpha-conotoxin-like Mi20.2, found in Conus miles (Soldier cone).